The primary structure comprises 325 residues: Thiamine-monophosphate kinase (325 aa).

4 residues coordinate Mg(2+): Asp30, Ser45, Thr46, and Asp47. Position 54 (His54) interacts with substrate. 2 residues coordinate Mg(2+): Asp75 and Asp122. ATP is bound by residues 121-122 (GD) and Arg146. Asp212 is a Mg(2+) binding site. ATP is bound at residue Ser214. Position 215 (Asp215) interacts with Mg(2+). 2 residues coordinate substrate: Glu263 and Tyr319.

It belongs to the thiamine-monophosphate kinase family.

The catalysed reaction is thiamine phosphate + ATP = thiamine diphosphate + ADP. It participates in cofactor biosynthesis; thiamine diphosphate biosynthesis; thiamine diphosphate from thiamine phosphate: step 1/1. Its function is as follows. Catalyzes the ATP-dependent phosphorylation of thiamine-monophosphate (TMP) to form thiamine-pyrophosphate (TPP), the active form of vitamin B1. The sequence is that of Thiamine-monophosphate kinase from Escherichia coli O157:H7.